Here is a 617-residue protein sequence, read N- to C-terminus: Hemagglutinin glycoprotein (617 aa).

The Intravirion portion of the chain corresponds to 1–37 (MSPQRDRINAFYKDNPHPKGSRIVINREHLMIDRPYV). The tract at residues 1–154 (MSPQRDRINA…RIKLDYDQYC (154 aa)) is stalk. Residues 38 to 58 (LLAVLFVMFLSLIGLLAIAGI) form a helical; Signal-anchor for type II membrane protein membrane-spanning segment. Residues 59–617 (RLHRAAIYTA…VTREDGTNRR (559 aa)) lie on the Virion surface side of the membrane. Asn-168, Asn-187, Asn-200, Asn-215, and Asn-238 each carry an N-linked (GlcNAc...) asparagine; by host glycan. Intrachain disulfides connect Cys-188–Cys-606, Cys-287–Cys-300, Cys-381–Cys-494, Cys-386–Cys-394, and Cys-570–Cys-579. The interval 458 to 543 (PMKNLALGVI…VEHAVVYYVY (86 aa)) is interaction with host NECTIN4 receptor.

Belongs to the paramyxoviruses hemagglutinin-neuraminidase family. Non-sialidase subfamily. In terms of assembly, homodimer; disulfide-linked. Further forms homotetramer (dimer of dimers). Interacts (via C-terminus) with human NECTIN4 (via N-terminus); this interaction allows attachment to the respiratory epithelium and viral entry. Interacts (via C-terminus) with human SLAMF1/CD150 (via N-terminus); this interaction allows attachment and viral entry into the CD150-expressing immune cells. Interacts with human CD46 antigen (via N-terminus); this interaction allows attachment and viral entry of vaccine and laboratory-adapted strains.

It localises to the virion membrane. It is found in the host cell membrane. Its function is as follows. Attaches the virus to the human SLAMF1/CD150 receptor for entry into host dendritic cells, macrophages, activated memory T cells and naive or memory B cells, thereby explaining the long immunosuppression that follows infection. In the respiratory airways, binds to the NECTIN4 receptor for entry into the host cell. Binding of H protein to the receptor induces a conformational change that allows the F protein to trigger virion/cell membranes fusion. The vaccine and laboratory-adapted strains use host CD46 as an alternate receptor. The high degree of interaction between H and CD46 results in down-regulation of the latter from the surface of infected cells, rendering them more sensitive to c3b-mediated complement lysis. The chain is Hemagglutinin glycoprotein (H) from Measles virus (strain Edmonston) (MeV).